The sequence spans 440 residues: Armadillo-like helical domain containing protein 1 (440 aa).

The sequence is that of Armadillo-like helical domain containing protein 1 from Homo sapiens (Human).